The chain runs to 287 residues: Prohibitin-1 (287 aa).

Residues 102–116 (VLQLPAIYQNLGLDY) are interaction with ATG8. An AIM motif is present at residues 109-112 (YQNL). A coiled-coil region spans residues 180 to 224 (EFTKAVEQKQIAQQDAERAKFLVEKAEQERQASVIRAEGEAESAE). The segment at 264-287 (SQHSGGGNSESSGSPNSLLLNIGR) is disordered. Residues 272-287 (SESSGSPNSLLLNIGR) are compositionally biased toward low complexity.

The protein belongs to the prohibitin family. As to quaternary structure, the mitochondrial prohibitin complex consists of two subunits (PHB1 and PHB2). The subunits assemble into a membrane-associated ring-shaped supercomplex of approximately 1 mDa. The mitochondrial prohibitin complex interacts with the m-AAA protease, a heterohexamer composed of YTA12/RCA1 and YTA10/AFG3. The mitochondrial prohibitin complex interacts with ATG8 and the interaction may support mitophagosome assembly. Post-translationally, the N-terminus is blocked.

It localises to the mitochondrion inner membrane. Prohibitin probably acts as a holdase/unfoldase for the stabilization of newly synthesized mitochondrial proteins. Involved in mitophagy; may act as an adapter for ATG8 that supports mitophagosome assembly. Negatively regulates the proteolytic processing of ATG32 via the i-AAA protease. Acts as a negative regulator of the m-AAA protease. The protein is Prohibitin-1 (PHB1) of Saccharomyces cerevisiae (strain ATCC 204508 / S288c) (Baker's yeast).